A 2760-amino-acid chain; its full sequence is A-kinase anchor protein 13 (2760 aa).

8 disordered regions span residues 356–388, 442–517, 530–577, 604–711, 729–857, 890–940, 954–1029, and 1132–1162; these read CSHK…QDSC, PDAR…EPKQ, AAGA…VLPA, SSLD…AAHN, EKDL…EQEG, GGSI…QEIS, EKAL…ASEA, and EGTD…DLPT. A compositionally biased stretch (polar residues) spans 378-388; it reads DSRSASHQDSC. The span at 442–454 shows a compositional bias: basic and acidic residues; that stretch reads PDARQHSSGRELP. Positions 482–504 are important for interaction with PRKAR2A; the sequence is QNSKPQVGESAKERLENSDISSA. Over residues 530 to 547 the composition is skewed to low complexity; it reads AAGADAPAEASPAWSPEE. 3 stretches are compositionally biased toward polar residues: residues 620–638, 654–664, and 701–711; these read KQNS…SQAP, CPQSTETSSGG, and DTVTSDTAAHN. Residues 769–780 are compositionally biased toward low complexity; it reads SSFSLASSPESE. Serine 776 is modified (phosphoserine). Phosphothreonine is present on threonine 801. Basic and acidic residues predominate over residues 814 to 826; the sequence is PDGRDLNDTDKVG. The segment covering 839 to 849 has biased composition (polar residues); it reads ELQTSMGNTSP. The segment covering 906–931 has biased composition (basic and acidic residues); sequence GKDKATKCPSVKEDVHSSEMSREDQR. The residue at position 932 (threonine 932) is a Phosphothreonine. 2 stretches are compositionally biased toward polar residues: residues 958-972 and 1001-1020; these read QHSN…CLQT and TSLS…SGSS. A Phosphoserine modification is found at serine 962. An important for interaction with PRKAR2A region spans residues 1213–1228; the sequence is SIEETATRIVEAVIKQ. Disordered stretches follow at residues 1392 to 1411, 1425 to 1508, and 1520 to 1539; these read GVLQ…PSDE, LLCD…VPAN, and SPFR…DAEM. Residues 1428–1439 are compositionally biased toward low complexity; sequence DTTGSSSSTDDT. The segment covering 1449 to 1472 has biased composition (polar residues); sequence GSDVSLPQTSKLNRSRNHQSSNGF. A phosphoserine mark is found at serine 1450, serine 1468, serine 1501, serine 1526, and serine 1585. The tract at residues 1546-1695 is important for interaction with MAP2K3; sequence QVLGHVVRRP…SRPFHSASAN (150 aa). A disordered region spans residues 1592 to 1628; sequence GGGVGNKPSSSLEISSANSSELRNPFSGEEQRSSLMS. A compositionally biased stretch (low complexity) spans 1600-1611; the sequence is SSSLEISSANSS. Phosphoserine is present on residues serine 1625, serine 1628, and serine 1630. Lysine 1654 is modified (N6-methyllysine). A disordered region spans residues 1733-1755; sequence RNKMSSSKKSKKEKDKKTLNGHT. A Phorbol-ester/DAG-type zinc finger spans residues 1753 to 1800; sequence GHTFSPIPIVGPINCSQCMKPFTNKDAYTCASCGAFVHKGCRENLASC. Residues serine 1838, serine 1857, and serine 1891 each carry the phosphoserine modification. Residues 1881-2760 are interaction with ESR1; it reads MSNTWKFLSH…VPAEGEEIFC (880 aa). Position 1892 is a phosphothreonine (threonine 1892). A phosphoserine mark is found at serine 1894 and serine 1907. In terms of domain architecture, DH spans 1956 to 2153; the sequence is KRQEVIYELM…KDVIGAVDSK (198 aa). A PH domain is found at 2176 to 2280; the sequence is MRMKSGQMFA…WIQIIQDTIN (105 aa). Serine 2292 and serine 2345 each carry phosphoserine. Positions 2292–2329 form a coiled coil; that stretch reads SENEEEKRLLDTKARELKEQLQQKDQQILLLLEEKEMI. At threonine 2415 the chain carries Phosphothreonine. Residues 2422–2450 form a disordered region; the sequence is HQLNASKGGEKEEGDDGQDLRRTESDSGL. Basic and acidic residues predominate over residues 2439 to 2450; it reads QDLRRTESDSGL. A phosphoserine mark is found at serine 2511 and serine 2514. Positions 2516-2632 form a coiled coil; sequence LIEQEKQRSL…LSQRQMEQDL (117 aa). 2 disordered regions span residues 2568-2588 and 2660-2760; these read AERE…REEL and TPSI…EIFC. Polar residues-rich tracts occupy residues 2660–2684 and 2696–2711; these read TPSI…SISR and SSAS…SQAP. Residue serine 2676 is modified to Phosphoserine. A compositionally biased stretch (low complexity) spans 2743 to 2752; that stretch reads PGDGPAPEVP.

In terms of assembly, interacts with the cAMP-dependent protein kinase (PKA) holoenzyme and with the regulatory subunit PRKAR2A. Interacts with RHOA. Also interacts with RHOB and RHOC. Identified in a ternary complex with RHOA and PRKAR2A. Identified in a complex with NR3C1 and RHOA. Interacts with BRAF and KSR1. Identified in a complex with BRAF and KSR1. Component of a signaling complex containing at least AKAP13, PKN1, MAPK14, ZAK and MAP2K3. Within this complex, AKAP13 interacts directly with PKN1, which in turn recruits MAPK14, MAP2K3 and ZAK. Interacts (phosphorylated form) with YWHAB and YWHAZ. Interaction with YWHAB inhibits activation of RHOA, interferes with PKN1 binding and activation of MAP kinases. Interacts with GNA12. Interacts with IKBKB. Interacts with ESR1, THRA, PPARA and NME2. Interacts (via the C-terminal domain after the PH domain) with MEF2C and RXRB. Interacts (via the C-terminal domain after the PH domain) with PRKD1. As to expression, detected in bone osteoblasts (at protein level).

The protein resides in the cytoplasm. It is found in the cytosol. It localises to the cell cortex. Its subcellular location is the nucleus. The protein localises to the membrane. In terms of biological role, scaffold protein that plays an important role in assembling signaling complexes downstream of several types of G protein-coupled receptors. Activates RHOA in response to signaling via G protein-coupled receptors via its function as Rho guanine nucleotide exchange factor. May also activate other Rho family members. Part of a kinase signaling complex that links ADRA1A and ADRA1B adrenergic receptor signaling to the activation of downstream p38 MAP kinases, such as MAPK11 and MAPK14. Part of a signaling complex that links ADRA1B signaling to the activation of RHOA and IKBKB/IKKB, leading to increased NF-kappa-B transcriptional activity. Part of a RHOA-dependent signaling cascade that mediates responses to lysophosphatidic acid (LPA), a signaling molecule that activates G-protein coupled receptors and potentiates transcriptional activation of the glucocorticoid receptor NR3C1. Part of a signaling cascade that stimulates MEF2C-dependent gene expression in response to lysophosphatidic acid (LPA). Part of a signaling pathway that activates MAPK11 and/or MAPK14 and leads to increased transcription activation of the estrogen receptors ESR1 and ESR2. Part of a signaling cascade that links cAMP and EGFR signaling to BRAF signaling and to PKA-mediated phosphorylation of KSR1, leading to the activation of downstream MAP kinases, such as MAPK1 or MAPK3. Functions as a scaffold protein that anchors cAMP-dependent protein kinase (PKA) and PRKD1. This promotes activation of PRKD1, leading to increased phosphorylation of HDAC5 and ultimately cardiomyocyte hypertrophy. Has no guanine nucleotide exchange activity on CDC42, Ras or Rac. Required for normal embryonic heart development, and in particular for normal sarcomere formation in the developing cardiomyocytes. Plays a role in cardiomyocyte growth and cardiac hypertrophy in response to activation of the beta-adrenergic receptor by phenylephrine or isoproterenol. Required for normal adaptive cardiac hypertrophy in response to pressure overload. Plays a role in osteogenesis. This Rattus norvegicus (Rat) protein is A-kinase anchor protein 13.